A 198-amino-acid polypeptide reads, in one-letter code: Acireductone dioxygenase (198 aa).

Fe(2+) contacts are provided by H97, H99, E103, and H141. Residues H97, H99, E103, and H141 each contribute to the Ni(2+) site.

The protein belongs to the acireductone dioxygenase (ARD) family. Monomer. Fe(2+) serves as cofactor. Requires Ni(2+) as cofactor.

The catalysed reaction is 1,2-dihydroxy-5-(methylsulfanyl)pent-1-en-3-one + O2 = 3-(methylsulfanyl)propanoate + CO + formate + 2 H(+). It carries out the reaction 1,2-dihydroxy-5-(methylsulfanyl)pent-1-en-3-one + O2 = 4-methylsulfanyl-2-oxobutanoate + formate + 2 H(+). It participates in amino-acid biosynthesis; L-methionine biosynthesis via salvage pathway; L-methionine from S-methyl-5-thio-alpha-D-ribose 1-phosphate: step 5/6. Its function is as follows. Catalyzes 2 different reactions between oxygen and the acireductone 1,2-dihydroxy-3-keto-5-methylthiopentene (DHK-MTPene) depending upon the metal bound in the active site. Fe-containing acireductone dioxygenase (Fe-ARD) produces formate and 2-keto-4-methylthiobutyrate (KMTB), the alpha-ketoacid precursor of methionine in the methionine recycle pathway. Ni-containing acireductone dioxygenase (Ni-ARD) produces methylthiopropionate, carbon monoxide and formate, and does not lie on the methionine recycle pathway. This is Acireductone dioxygenase from Synechococcus elongatus (strain ATCC 33912 / PCC 7942 / FACHB-805) (Anacystis nidulans R2).